The chain runs to 356 residues: Inositol monophosphatase 3 (356 aa).

A helical transmembrane segment spans residues leucine 11–phenylalanine 31. The Mg(2+) site is built by glutamate 127, aspartate 167, leucine 169, aspartate 170, and aspartate 293. Glutamate 127 serves as a coordination point for substrate. Residues leucine 169–threonine 172 and aspartate 293 each bind substrate.

The protein belongs to the inositol monophosphatase superfamily. Mg(2+) is required as a cofactor.

The protein localises to the membrane. It catalyses the reaction a myo-inositol phosphate + H2O = myo-inositol + phosphate. Its pathway is polyol metabolism; myo-inositol biosynthesis; myo-inositol from D-glucose 6-phosphate: step 2/2. The chain is Inositol monophosphatase 3 (bpnt2) from Xenopus tropicalis (Western clawed frog).